The sequence spans 556 residues: Genetic interactor of prohibitins 3, mitochondrial (556 aa).

Residues M1–K21 constitute a mitochondrion transit peptide. The region spanning E113–S305 is the CP-type G domain.

The protein belongs to the TRAFAC class YlqF/YawG GTPase family. GEP3 subfamily.

It is found in the mitochondrion. Functionally, interacts genetically with prohibitins and thus may be involved in the mitochondrial lipid metabolism. The sequence is that of Genetic interactor of prohibitins 3, mitochondrial (GEP3) from Saccharomyces cerevisiae (strain YJM789) (Baker's yeast).